The following is a 499-amino-acid chain: Aspartyl/glutamyl-tRNA(Asn/Gln) amidotransferase subunit B (499 aa).

It belongs to the GatB/GatE family. GatB subfamily. Heterotrimer of A, B and C subunits.

It carries out the reaction L-glutamyl-tRNA(Gln) + L-glutamine + ATP + H2O = L-glutaminyl-tRNA(Gln) + L-glutamate + ADP + phosphate + H(+). It catalyses the reaction L-aspartyl-tRNA(Asn) + L-glutamine + ATP + H2O = L-asparaginyl-tRNA(Asn) + L-glutamate + ADP + phosphate + 2 H(+). Allows the formation of correctly charged Asn-tRNA(Asn) or Gln-tRNA(Gln) through the transamidation of misacylated Asp-tRNA(Asn) or Glu-tRNA(Gln) in organisms which lack either or both of asparaginyl-tRNA or glutaminyl-tRNA synthetases. The reaction takes place in the presence of glutamine and ATP through an activated phospho-Asp-tRNA(Asn) or phospho-Glu-tRNA(Gln). The chain is Aspartyl/glutamyl-tRNA(Asn/Gln) amidotransferase subunit B from Leifsonia xyli subsp. xyli (strain CTCB07).